A 254-amino-acid chain; its full sequence is 5'/3'-nucleotidase SurE (254 aa).

Positions 9, 10, 40, and 93 each coordinate a divalent metal cation.

Belongs to the SurE nucleotidase family. A divalent metal cation is required as a cofactor.

Its subcellular location is the cytoplasm. It catalyses the reaction a ribonucleoside 5'-phosphate + H2O = a ribonucleoside + phosphate. It carries out the reaction a ribonucleoside 3'-phosphate + H2O = a ribonucleoside + phosphate. The enzyme catalyses [phosphate](n) + H2O = [phosphate](n-1) + phosphate + H(+). Its function is as follows. Nucleotidase with a broad substrate specificity as it can dephosphorylate various ribo- and deoxyribonucleoside 5'-monophosphates and ribonucleoside 3'-monophosphates with highest affinity to 3'-AMP. Also hydrolyzes polyphosphate (exopolyphosphatase activity) with the preference for short-chain-length substrates (P20-25). Might be involved in the regulation of dNTP and NTP pools, and in the turnover of 3'-mononucleotides produced by numerous intracellular RNases (T1, T2, and F) during the degradation of various RNAs. In Proteus mirabilis (strain HI4320), this protein is 5'/3'-nucleotidase SurE.